We begin with the raw amino-acid sequence, 40 residues long: MKVRASLKSLKQKEGSIVVRRRGKTYVLNKRNPRWKARQG.

It belongs to the bacterial ribosomal protein bL36 family.

The polypeptide is Large ribosomal subunit protein bL36A (Kineococcus radiotolerans (strain ATCC BAA-149 / DSM 14245 / SRS30216)).